The chain runs to 687 residues: Outer dynein arm-docking complex subunit 1 (687 aa).

Coiled coils occupy residues 100–193 (QVRV…YLNV), 222–267 (REEA…LKLK), and 341–421 (INEQ…LFTR). Positions 126-147 (SRNSAHSKNARSPGCVQHDKVK) are disordered. Disordered regions lie at residues 363-388 (VSGR…QRVD), 487-511 (FPKK…AKDD), and 540-687 (ESTP…QSNY). Positions 366-388 (RRSEEDRRAQQEQQRAELQQRVD) are enriched in basic and acidic residues. A compositionally biased stretch (low complexity) spans 544 to 556 (SMTSSTQKVSSSS). 2 stretches are compositionally biased toward polar residues: residues 557–611 (RLVT…SSRG) and 620–629 (RSPNSSSYLG). The span at 660–680 (SPGPASSPGPASSTGQASSTS) shows a compositional bias: low complexity.

This sequence belongs to the ODA1/DCC2 family. In terms of assembly, component of the outer dynein arm-docking complex along with ODAD2, ODAD3, ODAD4 and CLXN. Interacts with ODAD3. Interacts with ODAD4; this interaction may facilitate the recruitment and/or attachment of outer dynein arm docking complex proteins, including ODAD1, ODAD3, and ODAD4 to ciliary axonemes. Interacts with DNAH9. Interacts with MNS1. Interacts with PIERCE1 and PIERCE2; the interactions link the outer dynein arms docking complex (ODA-DC) to the internal microtubule inner proteins (MIP) in cilium axoneme. As to expression, expressed in trachea multiciliated cells.

The protein localises to the cytoplasm. Its subcellular location is the cytoskeleton. It localises to the cilium axoneme. In terms of biological role, component of the outer dynein arm-docking complex (ODA-DC) that mediates outer dynein arms (ODA) binding onto the doublet microtubule. Involved in mediating assembly of both ODAs and their axonemal docking complex onto ciliary microtubules. The protein is Outer dynein arm-docking complex subunit 1 (ODAD1) of Bos taurus (Bovine).